The primary structure comprises 298 residues: Putative glycylpeptide N-tetradecanoyltransferase (298 aa).

The protein belongs to the NMT family.

The enzyme catalyses N-terminal glycyl-[protein] + tetradecanoyl-CoA = N-tetradecanoylglycyl-[protein] + CoA + H(+). Functionally, adds a myristoyl group to the N-terminal glycine residue of certain proteins. This chain is Putative glycylpeptide N-tetradecanoyltransferase, found in Melanoplus sanguinipes (Migratory grasshopper).